The primary structure comprises 800 residues: U4/U6.U5 tri-snRNP-associated protein 1 (800 aa).

Positions 1 to 120 (MGSSKKHRGE…SSGDASSLSI (120 aa)) are disordered. The segment covering 32 to 42 (HREHKKHKHRS) has biased composition (basic residues). The segment covering 58–101 (ERGGERGSGRRGAEAEARSSTHGRERSQAEPSERRVKREKRDDG) has biased composition (basic and acidic residues). The span at 104 to 119 (AAASSKTSSGDASSLS) shows a compositional bias: low complexity. Residues Lys-125 and Lys-133 each participate in a glycyl lysine isopeptide (Lys-Gly) (interchain with G-Cter in SUMO2) cross-link. Residue Lys-141 forms a Glycyl lysine isopeptide (Lys-Gly) (interchain with G-Cter in SUMO1); alternate linkage. Lys-141 participates in a covalent cross-link: Glycyl lysine isopeptide (Lys-Gly) (interchain with G-Cter in SUMO2); alternate. Residues Lys-147 and Lys-188 each participate in a glycyl lysine isopeptide (Lys-Gly) (interchain with G-Cter in SUMO2) cross-link. Residues 157–231 (NPMALRQREE…KLLEEMDQEF (75 aa)) are a coiled coil. Thr-189 bears the Phosphothreonine mark. Residue Lys-277 forms a Glycyl lysine isopeptide (Lys-Gly) (interchain with G-Cter in SUMO2) linkage. The interval 311-330 (PDYLPYAEDESVDDLAQQKP) is disordered. Ser-321 carries the phosphoserine modification. Residues Lys-329 and Lys-336 each participate in a glycyl lysine isopeptide (Lys-Gly) (interchain with G-Cter in SUMO2) cross-link. The residue at position 348 (Ser-348) is a Phosphoserine. A Phosphothreonine modification is found at Thr-392. Glycyl lysine isopeptide (Lys-Gly) (interchain with G-Cter in SUMO2) cross-links involve residues Lys-400 and Lys-414. The interval 419–497 (RADDLLPLGD…QVLEEDEAEL (79 aa)) is disordered. Phosphothreonine is present on Thr-430. Residues Ser-448, Ser-474, Ser-486, and Ser-521 each carry the phosphoserine modification. Positions 490–533 (LEEDEAELELQKQLEKGRRLRQLQQLQQLRDSGEKVVEIVKKLE) form a coiled coil. Residue Lys-548 forms a Glycyl lysine isopeptide (Lys-Gly) (interchain with G-Cter in SUMO2) linkage. The tract at residues 571–604 (LAGNREEQEELMDFERDEERSANGGSESDGEENI) is disordered. Phosphoserine occurs at positions 591, 596, 598, and 621. Residues Lys-648, Lys-657, and Lys-684 each participate in a glycyl lysine isopeptide (Lys-Gly) (interchain with G-Cter in SUMO2) cross-link. A Phosphothreonine modification is found at Thr-695. Glycyl lysine isopeptide (Lys-Gly) (interchain with G-Cter in SUMO2) cross-links involve residues Lys-699, Lys-709, Lys-723, Lys-749, and Lys-758. Ser-761 is subject to Phosphoserine. Thr-764 carries the post-translational modification Phosphothreonine. Residues Lys-775 and Lys-780 each participate in a glycyl lysine isopeptide (Lys-Gly) (interchain with G-Cter in SUMO2) cross-link. A Phosphoserine modification is found at Ser-789. Lys-791 participates in a covalent cross-link: Glycyl lysine isopeptide (Lys-Gly) (interchain with G-Cter in SUMO2).

The protein belongs to the SNU66/SART1 family. In terms of assembly, identified in the spliceosome C complex. Component of the U4/U6-U5 tri-snRNP complex composed of the U4, U6 and U5 snRNAs and at least PRPF3, PRPF4, PRPF6, PRPF8, PRPF31, SNRNP200, TXNL4A, SNRNP40, DDX23, CD2BP2, PPIH, SNU13, EFTUD2, SART1 and USP39. Interacts with UBL5. Interacts with IVNS1ABP (via Kelch repeats). Sumoylated with SUMO2. As to expression, ubiquitously expressed.

The protein localises to the nucleus. In terms of biological role, plays a role in mRNA splicing as a component of the U4/U6-U5 tri-snRNP, one of the building blocks of the spliceosome. May also bind to DNA. This Homo sapiens (Human) protein is U4/U6.U5 tri-snRNP-associated protein 1 (SART1).